The primary structure comprises 984 residues: Putative formate dehydrogenase SAUSA300_2258 (984 aa).

A 2Fe-2S ferredoxin-type domain is found at 3–79 (EHLVVTLDGK…PMTVNTVNND (77 aa)). The [2Fe-2S] cluster site is built by cysteine 37, cysteine 48, cysteine 51, and cysteine 63. The 4Fe-4S His(Cys)3-ligated-type domain occupies 79 to 119 (DVKDAQKEALDRILEKHMLYCTVCDYNNGDCEIHNTMDAWG). [4Fe-4S] cluster-binding residues include histidine 95, cysteine 99, cysteine 102, cysteine 109, cysteine 147, cysteine 150, cysteine 153, cysteine 157, cysteine 190, cysteine 193, cysteine 196, cysteine 200, cysteine 264, cysteine 267, cysteine 271, and cysteine 299. 2 consecutive 4Fe-4S ferredoxin-type domains span residues 138–165 (PFYR…VNET) and 181–211 (NDVP…VNME). The segment at 252–984 (MRKERIKKTK…YVFPGNQVDK (733 aa)) is formate dehydrogenase. In terms of domain architecture, 4Fe-4S Mo/W bis-MGD-type spans 257–313 (IKKTKTVCTYCGVGCSFEVWTKDREILKVQPSHDSPANKIATCVKGKFSWGHINSDQ).

The protein in the C-terminal section; belongs to the prokaryotic molybdopterin-containing oxidoreductase family. It depends on [2Fe-2S] cluster as a cofactor. [4Fe-4S] cluster serves as cofactor. The cofactor is Mo-bis(molybdopterin guanine dinucleotide).

It catalyses the reaction formate + NAD(+) = CO2 + NADH. This is Putative formate dehydrogenase SAUSA300_2258 from Staphylococcus aureus (strain USA300).